Here is a 384-residue protein sequence, read N- to C-terminus: Cytochrome b (384 aa).

4 helical membrane passes run 32 to 52 (VGSLLGLCLVIQIASGIFLAM), 76 to 98 (WLIRYIHANGASFFFICMYLHIG), 113 to 133 (LWVIGVIIFVVTMATAFMGYC), and 179 to 199 (FFALHFLLPFILAALVCMHLM). The heme b site is built by H82 and H96. The heme b site is built by H183 and H197. H202 provides a ligand contact to a ubiquinone. 4 helical membrane-spanning segments follow: residues 225–245 (FIFKDLVTVFVFLLVFSLFVF), 289–309 (LGGVIAMFGAILILLTLPYTD), 321–341 (LSKFMFFLFLFNFILLGNLGQ), and 348–368 (YIELGQYATAFYFAYYLLIVP).

The protein belongs to the cytochrome b family. Fungal cytochrome b-c1 complex contains 10 subunits; 3 respiratory subunits, 2 core proteins and 5 low-molecular weight proteins. Cytochrome b-c1 complex is a homodimer. Heme b is required as a cofactor.

The protein resides in the mitochondrion inner membrane. Functionally, component of the ubiquinol-cytochrome c reductase complex (complex III or cytochrome b-c1 complex) that is part of the mitochondrial respiratory chain. The b-c1 complex mediates electron transfer from ubiquinol to cytochrome c. Contributes to the generation of a proton gradient across the mitochondrial membrane that is then used for ATP synthesis. This is Cytochrome b (COB) from Candida parapsilosis (Yeast).